The sequence spans 148 residues: Protein SprT-like (148 aa).

The SprT-like domain maps to 6-147; the sequence is LQQLVATISM…CGRCQGPIKL (142 aa). His67 is a binding site for Zn(2+). Glu68 is a catalytic residue. His71 lines the Zn(2+) pocket.

Belongs to the SprT family. It depends on Zn(2+) as a cofactor.

The protein localises to the cytoplasm. The polypeptide is Protein SprT-like (Lactiplantibacillus plantarum (strain ATCC BAA-793 / NCIMB 8826 / WCFS1) (Lactobacillus plantarum)).